We begin with the raw amino-acid sequence, 122 residues long: Large ribosomal subunit protein bL12 (122 aa).

The protein belongs to the bacterial ribosomal protein bL12 family. As to quaternary structure, homodimer. Part of the ribosomal stalk of the 50S ribosomal subunit. Forms a multimeric L10(L12)X complex, where L10 forms an elongated spine to which 2 to 4 L12 dimers bind in a sequential fashion. Binds GTP-bound translation factors.

Forms part of the ribosomal stalk which helps the ribosome interact with GTP-bound translation factors. Is thus essential for accurate translation. The protein is Large ribosomal subunit protein bL12 of Staphylococcus aureus (strain Mu50 / ATCC 700699).